The sequence spans 535 residues: CTP synthase (535 aa).

The interval 1 to 267 (MTKFIFVTGG…DDIVIKRLDL (267 aa)) is amidoligase domain. S13 lines the CTP pocket. S13 is a UTP binding site. 14-19 (SLGKGI) contributes to the ATP binding site. Residue Y54 participates in L-glutamine binding. Residue D71 participates in ATP binding. D71 and E141 together coordinate Mg(2+). Residues 148–150 (DIE), 188–193 (KTKPTQ), and K224 contribute to the CTP site. Residues 188-193 (KTKPTQ) and K224 each bind UTP. ATP is bound at residue 240–242 (RDA). A Glutamine amidotransferase type-1 domain is found at 293-535 (TIGLVGKYVS…VEAAYKHQNK (243 aa)). G355 contributes to the L-glutamine binding site. C382 serves as the catalytic Nucleophile; for glutamine hydrolysis. Residues 383–386 (LGMQ), E406, and R463 contribute to the L-glutamine site. Catalysis depends on residues H508 and E510.

The protein belongs to the CTP synthase family. As to quaternary structure, homotetramer.

It carries out the reaction UTP + L-glutamine + ATP + H2O = CTP + L-glutamate + ADP + phosphate + 2 H(+). It catalyses the reaction L-glutamine + H2O = L-glutamate + NH4(+). The catalysed reaction is UTP + NH4(+) + ATP = CTP + ADP + phosphate + 2 H(+). It functions in the pathway pyrimidine metabolism; CTP biosynthesis via de novo pathway; CTP from UDP: step 2/2. Its activity is regulated as follows. Allosterically activated by GTP, when glutamine is the substrate; GTP has no effect on the reaction when ammonia is the substrate. The allosteric effector GTP functions by stabilizing the protein conformation that binds the tetrahedral intermediate(s) formed during glutamine hydrolysis. Inhibited by the product CTP, via allosteric rather than competitive inhibition. In terms of biological role, catalyzes the ATP-dependent amination of UTP to CTP with either L-glutamine or ammonia as the source of nitrogen. Regulates intracellular CTP levels through interactions with the four ribonucleotide triphosphates. The chain is CTP synthase from Staphylococcus haemolyticus (strain JCSC1435).